A 554-amino-acid chain; its full sequence is Arginine--tRNA ligase (554 aa).

A 'HIGH' region motif is present at residues 132–142 (ANPTGPIHLGG).

The protein belongs to the class-I aminoacyl-tRNA synthetase family. In terms of assembly, monomer.

The protein resides in the cytoplasm. The enzyme catalyses tRNA(Arg) + L-arginine + ATP = L-arginyl-tRNA(Arg) + AMP + diphosphate. The polypeptide is Arginine--tRNA ligase (Clavibacter sepedonicus (Clavibacter michiganensis subsp. sepedonicus)).